A 65-amino-acid chain; its full sequence is Small ribosomal subunit protein bS21 (65 aa).

This sequence belongs to the bacterial ribosomal protein bS21 family.

This Aster yellows phytoplasma protein is Small ribosomal subunit protein bS21.